A 103-amino-acid polypeptide reads, in one-letter code: Cell division protein FtsB (103 aa).

Over 1–3 (MGK) the chain is Cytoplasmic. A helical transmembrane segment spans residues 4-21 (LTLLLLAILVWLQYSLWF). The Periplasmic portion of the chain corresponds to 22 to 103 (GKNGIHDYTR…RAQSAGQNNR (82 aa)). A coiled-coil region spans residues 31-71 (RVNDDVAAQQATNAKLKARNDQLFAEIDDLNGGQEALEERA).

This sequence belongs to the FtsB family. In terms of assembly, part of a complex composed of FtsB, FtsL and FtsQ.

The protein resides in the cell inner membrane. Functionally, essential cell division protein. May link together the upstream cell division proteins, which are predominantly cytoplasmic, with the downstream cell division proteins, which are predominantly periplasmic. This chain is Cell division protein FtsB, found in Escherichia coli O157:H7.